The sequence spans 388 residues: Nuclear hormone receptor family member nhr-16 (388 aa).

Residues 11-86 (FLKCAICQES…VGMNPAGVQQ (76 aa)) constitute a DNA-binding region (nuclear receptor). NR C4-type zinc fingers lie at residues 14-34 (CAIC…CRAC) and 50-74 (CQGN…YIKC). The 273-residue stretch at 115 to 387 (PPSSLMLHIP…DEFYNLMSGR (273 aa)) folds into the NR LBD domain.

It belongs to the nuclear hormone receptor family.

The protein localises to the nucleus. Functionally, orphan nuclear receptor. The polypeptide is Nuclear hormone receptor family member nhr-16 (nhr-16) (Caenorhabditis elegans).